A 103-amino-acid chain; its full sequence is Large ribosomal subunit protein bL21 (103 aa).

The protein belongs to the bacterial ribosomal protein bL21 family. As to quaternary structure, part of the 50S ribosomal subunit. Contacts protein L20.

In terms of biological role, this protein binds to 23S rRNA in the presence of protein L20. This chain is Large ribosomal subunit protein bL21, found in Bordetella petrii (strain ATCC BAA-461 / DSM 12804 / CCUG 43448).